Here is a 128-residue protein sequence, read N- to C-terminus: Protein BEX1 (128 aa).

The tract at residues 1–37 is disordered; that stretch reads MESKEKRAVNNLSMENTNQENEEKEEKEQVANKGEPL. Position 105 is a phosphoserine (Ser105). The interval 107–128 is disordered; sequence SLRAVSTDPPHHDHHDEFCLMP. Positions 115-128 are enriched in basic and acidic residues; that stretch reads PPHHDHHDEFCLMP. The his cluster stretch occupies residues 117–121; that stretch reads HHDHH. Cys125 is a binding site for Zn(2+).

It belongs to the BEX family. Interacts with neurotrophin receptor p75NTR/NGFR. Interacts with OMP. Phosphorylated. Phosphorylation of Ser-105 protects it from the proteasome. In terms of processing, ubiquitinated. Degraded by the proteasome.

It is found in the nucleus. The protein localises to the cytoplasm. Functionally, signaling adapter molecule involved in p75NTR/NGFR signaling. Plays a role in cell cycle progression and neuronal differentiation. Inhibits neuronal differentiation in response to nerve growth factor (NGF). May act as a link between the cell cycle and neurotrophic factor signaling, possibly by functioning as an upstream modulator of receptor signaling, coordinating biological responses to external signals with internal cellular states. In absence of reductive stress, acts as a pseudosubstrate for the CRL2(FEM1B) complex: associates with FEM1B via zinc, thereby preventing association between FEM1B and its substrates. The polypeptide is Protein BEX1 (BEX1) (Macaca fascicularis (Crab-eating macaque)).